A 38-amino-acid chain; its full sequence is Photosystem II reaction center protein L (38 aa).

The helical transmembrane segment at 17–37 (SLYWGLLLIFVLAILFSSYIF) threads the bilayer.

It belongs to the PsbL family. As to quaternary structure, PSII is composed of 1 copy each of membrane proteins PsbA, PsbB, PsbC, PsbD, PsbE, PsbF, PsbH, PsbI, PsbJ, PsbK, PsbL, PsbM, PsbT, PsbX, PsbY, PsbZ, Psb30/Ycf12, at least 3 peripheral proteins of the oxygen-evolving complex and a large number of cofactors. It forms dimeric complexes.

The protein resides in the plastid. Its subcellular location is the chloroplast thylakoid membrane. In terms of biological role, one of the components of the core complex of photosystem II (PSII). PSII is a light-driven water:plastoquinone oxidoreductase that uses light energy to abstract electrons from H(2)O, generating O(2) and a proton gradient subsequently used for ATP formation. It consists of a core antenna complex that captures photons, and an electron transfer chain that converts photonic excitation into a charge separation. This subunit is found at the monomer-monomer interface and is required for correct PSII assembly and/or dimerization. The chain is Photosystem II reaction center protein L from Nephroselmis olivacea (Green alga).